A 472-amino-acid chain; its full sequence is Mixed lineage kinase domain-like protein (472 aa).

Residues 1 to 143 are N-terminal bundle and brace (NBB); mediates INSP6 binding; the sequence is MDKLGQIIKL…QEDRQDAEED (143 aa). A coiled-coil region spans residues 61–81; that stretch reads LGRFDEVLKEANQQIEKFSKK. A Phosphoserine modification is found at Ser-124. A coiled-coil region spans residues 138–229; that stretch reads QDAEEDGNEN…VFNNPQAESV (92 aa). One can recognise a Protein kinase domain in the interval 192–456; that stretch reads GPPWTKLKTS…DGRSLSGRER (265 aa). Residues 198-206 and Lys-219 each bind ATP; that span reads LKTSKMSTI. Phosphoserine; by RIPK3 occurs at positions 345 and 347. Phosphothreonine; by RIPK3 is present on Thr-349. Phosphoserine; by RIPK3 is present on Ser-352.

The protein belongs to the protein kinase superfamily. Homooligomer. Homotrimer; forms homotrimers on necroptosis induction. Upon TNF-induced necrosis, forms in complex with PGAM5, RIPK1 and RIPK3. Within this complex, may play a role in the proper targeting of RIPK1-RIPK3 to its downstream effector PGAM5. Interacts with RIPK3; the interaction is direct and promotes its phosphorylation and subsequent activation. Post-translationally, phosphorylation by RIPK3 induces a conformational switch that is required for necroptosis. It also induces homotrimerization and localization to the plasma membrane. As to expression, highly expressed in thymus, colon, intestine, liver, spleen and lung. Expressed at much lower level in skeletal muscle, heart and kidney. Not detected in brain.

The protein localises to the cytoplasm. Its subcellular location is the cell membrane. It localises to the nucleus. Its activity is regulated as follows. Activated via binding to highly phosphorylated inositol phosphates such as inositolhexakisphosphate (InsP6) which mediates the release of an N-terminal auto-inhibitory region. Activation requires not only RIPK3-dependent phosphorylation but also binding to highly phosphorylated inositol phosphates. Its function is as follows. Pseudokinase that plays a key role in TNF-induced necroptosis, a programmed cell death process. Does not have protein kinase activity. Activated following phosphorylation by RIPK3, leading to homotrimerization, localization to the plasma membrane and execution of programmed necrosis characterized by calcium influx and plasma membrane damage. In addition to TNF-induced necroptosis, necroptosis can also take place in the nucleus in response to orthomyxoviruses infection: following ZBP1 activation, which senses double-stranded Z-RNA structures, nuclear RIPK3 catalyzes phosphorylation and activation of MLKL, promoting disruption of the nuclear envelope and leakage of cellular DNA into the cytosol. Binds to highly phosphorylated inositol phosphates such as inositolhexakisphosphate (InsP6) which is essential for its necroptotic function. In Mus musculus (Mouse), this protein is Mixed lineage kinase domain-like protein.